The primary structure comprises 341 residues: Biotin synthase (341 aa).

The region spanning 53 to 272 is the Radical SAM core domain; sequence NHVETASLLS…IAVARIMMPK (220 aa). Residues C68, C72, and C75 each coordinate [4Fe-4S] cluster. C112, C143, C203, and R276 together coordinate [2Fe-2S] cluster.

Belongs to the radical SAM superfamily. Biotin synthase family. Homodimer. [4Fe-4S] cluster serves as cofactor. [2Fe-2S] cluster is required as a cofactor.

It catalyses the reaction (4R,5S)-dethiobiotin + (sulfur carrier)-SH + 2 reduced [2Fe-2S]-[ferredoxin] + 2 S-adenosyl-L-methionine = (sulfur carrier)-H + biotin + 2 5'-deoxyadenosine + 2 L-methionine + 2 oxidized [2Fe-2S]-[ferredoxin]. It participates in cofactor biosynthesis; biotin biosynthesis; biotin from 7,8-diaminononanoate: step 2/2. In terms of biological role, catalyzes the conversion of dethiobiotin (DTB) to biotin by the insertion of a sulfur atom into dethiobiotin via a radical-based mechanism. The protein is Biotin synthase of Nitrobacter winogradskyi (strain ATCC 25391 / DSM 10237 / CIP 104748 / NCIMB 11846 / Nb-255).